A 187-amino-acid chain; its full sequence is Cell division protein SepF (187 aa).

The tract at residues 13–74 (GLAEDDRYAE…PAPATTAQVT (62 aa)) is disordered. Residues 16 to 65 (EDDRYAEDTEPETTRPRVEAAREVRVESRHEARPEVRHEPRPEVSVERRP) are compositionally biased toward basic and acidic residues.

This sequence belongs to the SepF family. Homodimer. Interacts with FtsZ.

The protein resides in the cytoplasm. Its function is as follows. Cell division protein that is part of the divisome complex and is recruited early to the Z-ring. Probably stimulates Z-ring formation, perhaps through the cross-linking of FtsZ protofilaments. Its function overlaps with FtsA. The polypeptide is Cell division protein SepF (Kineococcus radiotolerans (strain ATCC BAA-149 / DSM 14245 / SRS30216)).